The following is a 72-amino-acid chain: MAKDDVIEIQGTVTDTLPNAMFKVKLENGAEILAHVSGKIRMHYIRILPGDKVTVELSPYDLTKGRITYRFK.

The S1-like domain maps to 1–72 (MAKDDVIEIQ…TKGRITYRFK (72 aa)).

It belongs to the IF-1 family. As to quaternary structure, component of the 30S ribosomal translation pre-initiation complex which assembles on the 30S ribosome in the order IF-2 and IF-3, IF-1 and N-formylmethionyl-tRNA(fMet); mRNA recruitment can occur at any time during PIC assembly.

The protein resides in the cytoplasm. Functionally, one of the essential components for the initiation of protein synthesis. Stabilizes the binding of IF-2 and IF-3 on the 30S subunit to which N-formylmethionyl-tRNA(fMet) subsequently binds. Helps modulate mRNA selection, yielding the 30S pre-initiation complex (PIC). Upon addition of the 50S ribosomal subunit IF-1, IF-2 and IF-3 are released leaving the mature 70S translation initiation complex. The chain is Translation initiation factor IF-1 from Lacticaseibacillus paracasei (strain ATCC 334 / BCRC 17002 / CCUG 31169 / CIP 107868 / KCTC 3260 / NRRL B-441) (Lactobacillus paracasei).